A 328-amino-acid chain; its full sequence is Phosphate acyltransferase (328 aa).

This sequence belongs to the PlsX family. In terms of assembly, homodimer. Probably interacts with PlsY.

Its subcellular location is the cytoplasm. It carries out the reaction a fatty acyl-[ACP] + phosphate = an acyl phosphate + holo-[ACP]. It participates in lipid metabolism; phospholipid metabolism. Its function is as follows. Catalyzes the reversible formation of acyl-phosphate (acyl-PO(4)) from acyl-[acyl-carrier-protein] (acyl-ACP). This enzyme utilizes acyl-ACP as fatty acyl donor, but not acyl-CoA. This Staphylococcus aureus (strain MSSA476) protein is Phosphate acyltransferase.